Reading from the N-terminus, the 895-residue chain is Putative endoplasmic reticulum metallopeptidase 1-B (895 aa).

Positions 1–27 (MSTGIRRRHADEKKNILEKESLQNDET) are disordered. Residues 1 to 39 (MSTGIRRRHADEKKNILEKESLQNDETQREMEKDISLLR) lie on the Cytoplasmic side of the membrane. Basic and acidic residues predominate over residues 9–27 (HADEKKNILEKESLQNDET). A helical transmembrane segment spans residues 40–60 (PAHWNFIGLFFLVLIIGTTFL). At 61-374 (HKCLPEPKDP…KPAEYADRKT (314 aa)) the chain is on the lumenal side. Residue Asn-156 is glycosylated (N-linked (GlcNAc...) asparagine). Residues His-180 and Asp-192 each coordinate Zn(2+). Glu-226 acts as the Proton acceptor in catalysis. Residues Glu-227, Glu-253, and His-329 each contribute to the Zn(2+) site. The chain crosses the membrane as a helical span at residues 375 to 395 (VFFDFLGLFVIIYPLSIAHLV). Over 396-424 (NMLTICTVIALMSHRFYSKTFITFLALRD) the chain is Cytoplasmic. The helical transmembrane segment at 425 to 445 (YVLTILTIALVLKAMTFMSLF) threads the bilayer. The Lumenal portion of the chain corresponds to 446-457 (TYGALRWYTRHW). Residues 458-478 (LALVAYGLPSVWAGISVQGLL) traverse the membrane as a helical segment. The Cytoplasmic portion of the chain corresponds to 479 to 489 (TARLAPKAREE). Residues 490 to 512 (YGSTLELIHLTLISGILLAFTYY) traverse the membrane as a helical segment. Residues 513–515 (DIA) are Lumenal-facing. A helical membrane pass occupies residues 516 to 538 (SGFLFALLLVPAIKSIITYFGAW). The Cytoplasmic segment spans residues 539–553 (PTCPTFNTILTLILS). A helical transmembrane segment spans residues 554-574 (FPGCAMAIYTTEMLLSIFIPI). The Lumenal portion of the chain corresponds to 575–584 (MGRSSYNPEP). Residues 585–605 (AVSFFVAFSAGCIVLSLGGLV) form a helical membrane-spanning segment. Over 606-619 (AKSRNSRSSNEAGL) the chain is Cytoplasmic. A helical membrane pass occupies residues 620–640 (LELIYNILGVLLVTLTILYVF). The Lumenal portion of the chain corresponds to 641–895 (SSFWPSPYRF…WNVDQVYKYF (255 aa)). N-linked (GlcNAc...) asparagine glycans are attached at residues Asn-679 and Asn-796.

The protein belongs to the peptidase M28 family. The cofactor is Zn(2+).

It is found in the endoplasmic reticulum membrane. The protein is Putative endoplasmic reticulum metallopeptidase 1-B of Caenorhabditis elegans.